Reading from the N-terminus, the 607-residue chain is Karyogamy meiotic segregation protein 1 (607 aa).

A disordered region spans residues 83–135; that stretch reads DDSFANQAEKPSMEQQNSKNSIKEDANEHSVNSAHSKSSSNASPESLNPSQMM. Residues 111-132 show a composition bias toward low complexity; sequence HSVNSAHSKSSSNASPESLNPS.

Interacts with mcp1 and sad1.

The protein localises to the cytoplasm. The protein resides in the cytoskeleton. It localises to the microtubule organizing center. Its subcellular location is the spindle pole body. Functionally, has a role in karyogamy, recombination and segregation during meiosis. Although it has been shown to associate with the spindle pole body it is unlikely to be involved in its formation or maintenance. The polypeptide is Karyogamy meiotic segregation protein 1 (kms1) (Schizosaccharomyces pombe (strain 972 / ATCC 24843) (Fission yeast)).